The primary structure comprises 180 residues: Kappa-casein (180 aa).

The N-terminal stretch at 1–21 is a signal peptide; sequence MMKHFLLVVNILAVTLPFLAA. O-linked (GalNAc...) threonine glycosylation is found at Thr132, Thr142, Thr147, and Thr153. Ser160 carries the phosphoserine; alternate modification. Ser160 is a glycosylation site (O-linked (GalNAc...) serine; alternate).

Belongs to the kappa-casein family. In terms of tissue distribution, mammary gland specific. Secreted in milk.

It is found in the secreted. Kappa-casein stabilizes micelle formation, preventing casein precipitation in milk. The protein is Kappa-casein (CSN3) of Oryctolagus cuniculus (Rabbit).